The primary structure comprises 1142 residues: Enamelin (1142 aa).

An N-terminal signal peptide occupies residues 1–38 (MLLSCRHGASSPKLDNLVPSGKMKILLVFLGLLCYSAA). Phosphoserine is present on Ser-53. 4 disordered regions span residues 90 to 347 (YQMP…FYRN), 374 to 513 (YRRV…IIPK), 543 to 587 (TEGI…LSHG), and 603 to 662 (RENS…FPGQ). A compositionally biased stretch (pro residues) spans 128 to 148 (QPQPKTPTPKQPLNEPSPTPT). Phosphoserine is present on residues Ser-191 and Ser-216. Basic and acidic residues predominate over residues 223 to 234 (DFEKPKEKDPPK). Polar residues-rich tracts occupy residues 243-303 (SVNT…SQSP) and 381-395 (TARS…NSAN). 4 N-linked (GlcNAc...) asparagine glycosylation sites follow: Asn-245, Asn-252, Asn-264, and Asn-291. The propeptide occupies 277-514 (NPRSNPTGQN…QTQTQIIPKG (238 aa)). The segment covering 431 to 442 (PREKQVSQKERT) has biased composition (basic and acidic residues). Over residues 453-467 (WRNSQDYGINKSNYK) the composition is skewed to polar residues. The N-linked (GlcNAc...) asparagine glycan is linked to Asn-462. Residue Pro-547 is modified to Hydroxyproline. A compositionally biased stretch (basic and acidic residues) spans 570-582 (FKEDPGRQEEHLP). Positions 666–669 (DMEE) are excised as a propeptide. A compositionally biased stretch (polar residues) spans 787 to 816 (NLYKTPTSSPHQKENQPYSNNSPAGLQKNP). Disordered stretches follow at residues 787-820 (NLYK…TWHE), 921-965 (TSIV…SQLS), and 1020-1049 (VFGT…QQRQ). Asn-929 is a glycosylation site (N-linked (GlcNAc...) asparagine). Residues 952–965 (LRRSTPCSVKSQLS) show a composition bias toward polar residues. An N-linked (GlcNAc...) asparagine glycan is attached at Asn-1040.

Post-translationally, proteolytically cleaved into several smaller polypeptides. Cleavage of N-terminal region of enamelin occurs soon after secretion. In terms of processing, phosphorylated by FAM20C in vitro. In terms of tissue distribution, expressed by secretory-phase ameloblasts. Intact enamelin and large-molecular-weight enamelins are limited to the most superficial layer of the developing enamel matrix, while low-molecular-weight enamelins are observed in deeper enamelin. Preferential localization among the crystallites in rod and interrod enamel.

It localises to the secreted. Its subcellular location is the extracellular space. The protein localises to the extracellular matrix. Involved in the mineralization and structural organization of enamel. Involved in the extension of enamel during the secretory stage of dental enamel formation. This Sus scrofa (Pig) protein is Enamelin (ENAM).